Here is a 122-residue protein sequence, read N- to C-terminus: Small ribosomal subunit protein uS13 (122 aa).

Residues 99–122 (RGQRTHTNARTRKGPAKAIAGKKK) are disordered.

The protein belongs to the universal ribosomal protein uS13 family. In terms of assembly, part of the 30S ribosomal subunit. Forms a loose heterodimer with protein S19. Forms two bridges to the 50S subunit in the 70S ribosome.

In terms of biological role, located at the top of the head of the 30S subunit, it contacts several helices of the 16S rRNA. In the 70S ribosome it contacts the 23S rRNA (bridge B1a) and protein L5 of the 50S subunit (bridge B1b), connecting the 2 subunits; these bridges are implicated in subunit movement. Contacts the tRNAs in the A and P-sites. This chain is Small ribosomal subunit protein uS13, found in Rhodopseudomonas palustris (strain TIE-1).